A 492-amino-acid chain; its full sequence is Solute carrier family 2, facilitated glucose transporter member 1 (492 aa).

Position 1 is an N-acetylmethionine (M1). Topologically, residues 1-11 (MDPSSKKVTGR) are cytoplasmic. A helical membrane pass occupies residues 12 to 33 (LMLAVGGAVLGSLQFGYNTGVI). Residues 34–66 (NAPQKVIEEFYNQTWNHRYGEPIPSTTLTTLWS) are Extracellular-facing. An N-linked (GlcNAc...) asparagine glycan is attached at N45. A helical transmembrane segment spans residues 67–87 (LSVAIFSVGGMIGSFSVGLFV). Topologically, residues 88–90 (NRF) are cytoplasmic. A helical transmembrane segment spans residues 91–112 (GRRNSMLMMNLLAFVAAVLMGF). The Extracellular segment spans residues 113 to 120 (SKLGKSFE). Residues 121–144 (MLILGRFIIGVYCGLTTGFVPMYV) traverse the membrane as a helical segment. Residues 145-155 (GEVSPTALRGA) lie on the Cytoplasmic side of the membrane. The chain crosses the membrane as a helical span at residues 156–176 (LGTLHQLGIVVGILIAQVFGL). A D-glucose-binding site is contributed by Q161. Residues 177 to 185 (DSIMGNADL) lie on the Extracellular side of the membrane. The chain crosses the membrane as a helical span at residues 186-206 (WPLLLSVIFIPALLQCILLPF). Over 207–271 (CPESPRFLLI…LFRSPAYRQP (65 aa)) the chain is Cytoplasmic. The residue at position 226 (S226) is a Phosphoserine. Residues 272–293 (ILIAVVLQLSQQLSGINAVFYY) form a helical membrane-spanning segment. D-glucose-binding positions include 282–283 (QQ) and N288. At 294-306 (STSIFEKAGVQQP) the chain is on the extracellular side. A helical membrane pass occupies residues 307–328 (VYATIGSGIVNTAFTVVSLFVV). Position 317 (N317) interacts with D-glucose. Residues 329–334 (ERAGRR) lie on the Cytoplasmic side of the membrane. The helical transmembrane segment at 335 to 355 (TLHLIGLAGMAGCAVLMTIAL) threads the bilayer. Over 356 to 365 (ALLERLPWMS) the chain is Extracellular. The helical transmembrane segment at 366-388 (YLSIVAIFGFVAFFEVGPGPIPW) threads the bilayer. Positions 380 and 388 each coordinate D-glucose. Residues 389 to 401 (FIVAELFSQGPRP) lie on the Cytoplasmic side of the membrane. Residues 402 to 422 (AAIAVAGFSNWTSNFIVGMCF) form a helical membrane-spanning segment. Topologically, residues 423 to 429 (QYVEQLC) are extracellular. A helical transmembrane segment spans residues 430-450 (GPYVFIIFTVLLVLFFIFTYF). The Cytoplasmic segment spans residues 451-492 (KVPETKGRTFDEIASGFRQGGASQSDKTPEELFHPLGADSQV). S465 is modified (phosphoserine). Residues 468–492 (RQGGASQSDKTPEELFHPLGADSQV) are disordered. T478 carries the phosphothreonine modification. S490 carries the post-translational modification Phosphoserine.

Belongs to the major facilitator superfamily. Sugar transporter (TC 2.A.1.1) family. Glucose transporter subfamily. In terms of assembly, found in a complex with ADD2, DMTN and SLC2A1. Interacts (via C-terminus cytoplasmic region) with DMTN isoform 2. Interacts with SNX27; the interaction is required when endocytosed to prevent degradation in lysosomes and promote recycling to the plasma membrane. Interacts with GIPC (via PDZ domain). Interacts with STOM. Interacts with SGTA (via Gln-rich region). Interacts with isoform 1 of BSG. Interacts with SMIM43; the interaction may promote SLC2A1-mediated glucose transport to meet the energy needs of mesendoderm differentiation. Post-translationally, phosphorylation at Ser-226 by PKC promotes glucose uptake by increasing cell membrane localization. As to expression, retina (at protein level).

Its subcellular location is the cell membrane. It is found in the photoreceptor inner segment. It catalyses the reaction D-glucose(out) = D-glucose(in). Its activity is regulated as follows. The uptake of glucose is inhibited by cytochalasin B. Glucose uptake is increased in response to phorbol ester 12-O-tetradecanoylphorbol-13-acetate (TPA) treatment: TPA-induced glucose uptake requires phosphorylation at Ser-226. Its function is as follows. Facilitative glucose transporter, which is responsible for constitutive or basal glucose uptake. Has a very broad substrate specificity; can transport a wide range of aldoses including both pentoses and hexoses. Most important energy carrier of the brain: present at the blood-brain barrier and assures the energy-independent, facilitative transport of glucose into the brain. In association with BSG and NXNL1, promotes retinal cone survival by increasing glucose uptake into photoreceptors. Required for mesendoderm differentiation. In Mus musculus (Mouse), this protein is Solute carrier family 2, facilitated glucose transporter member 1.